An 83-amino-acid polypeptide reads, in one-letter code: Phosphoribosylformylglycinamidine synthase subunit PurS (83 aa).

It belongs to the PurS family. Homodimer. Part of the FGAM synthase complex composed of 1 PurL, 1 PurQ and 2 PurS subunits.

It localises to the cytoplasm. The catalysed reaction is N(2)-formyl-N(1)-(5-phospho-beta-D-ribosyl)glycinamide + L-glutamine + ATP + H2O = 2-formamido-N(1)-(5-O-phospho-beta-D-ribosyl)acetamidine + L-glutamate + ADP + phosphate + H(+). Its pathway is purine metabolism; IMP biosynthesis via de novo pathway; 5-amino-1-(5-phospho-D-ribosyl)imidazole from N(2)-formyl-N(1)-(5-phospho-D-ribosyl)glycinamide: step 1/2. Part of the phosphoribosylformylglycinamidine synthase complex involved in the purines biosynthetic pathway. Catalyzes the ATP-dependent conversion of formylglycinamide ribonucleotide (FGAR) and glutamine to yield formylglycinamidine ribonucleotide (FGAM) and glutamate. The FGAM synthase complex is composed of three subunits. PurQ produces an ammonia molecule by converting glutamine to glutamate. PurL transfers the ammonia molecule to FGAR to form FGAM in an ATP-dependent manner. PurS interacts with PurQ and PurL and is thought to assist in the transfer of the ammonia molecule from PurQ to PurL. This chain is Phosphoribosylformylglycinamidine synthase subunit PurS, found in Methanocaldococcus jannaschii (strain ATCC 43067 / DSM 2661 / JAL-1 / JCM 10045 / NBRC 100440) (Methanococcus jannaschii).